Consider the following 684-residue polypeptide: Rabphilin-3A (684 aa).

Positions 1-21 (MTDTVVNRWMYPGDGPLQSND) are disordered. In terms of domain architecture, RabBD spans 40–157 (QRKQEELTDE…KRSGAWFFKG (118 aa)). An FYVE-type zinc finger spans residues 88–145 (GDGVNRCILCGEQLGMLGSACVVCEDCKKNVCTKCGVETSNNRPHPVWLCKICLEQRE). Zn(2+)-binding residues include Cys-94, Cys-97, Cys-111, Cys-114, Cys-119, Cys-122, Cys-137, and Cys-140. The segment at 162 to 377 (VLPQPMPIKK…EEEEANSYDS (216 aa)) is disordered. Basic and acidic residues predominate over residues 199-208 (ARGDMEDRRA). Arg-223 is subject to Omega-N-methylarginine. Over residues 243–252 (RDSEGWDHGH) the composition is skewed to basic and acidic residues. Ser-274 carries the post-translational modification Phosphoserine. A compositionally biased stretch (pro residues) spans 283-299 (ASMPSPAPPQPVQPGPP). Residues 301-310 (GSRAAPGPGR) show a composition bias toward low complexity. The C2 1 domain maps to 382-504 (TLGALEFSLL…KANQRKNFNI (123 aa)). Positions 412, 413, 419, 474, 475, 476, 482, 529, 571, 577, 631, 632, 633, and 639 each coordinate Ca(2+). Residues 540–673 (ERGKILVSLM…NKDKKIERWH (134 aa)) form the C2 2 domain. Phosphoserine occurs at positions 682 and 683.

As to quaternary structure, interacts with RAB3B, RAB3C, RAB3D, RAB8A, RAB27A and RAB27B. Interacts with RAB3A; this interaction recruits RPH3A to synaptic vesicules. Interacts (via C2B domain) with SNAP25. Interacts with deubiquitinating enzyme CAND1; this interaction results in the deubiquitination of RPH3A. Interacts with GRIN2A and DLG4; this ternary complex regulates NMDA receptor composition at postsynaptic membranes. Interacts with SNCA. Ca(2+) serves as cofactor. Ubiquitinated. Deubiquitinated by CAND1 to prevent its degradation. As to expression, specifically expressed in brain.

It localises to the cytoplasmic vesicle. The protein resides in the secretory vesicle. The protein localises to the synaptic vesicle membrane. It is found in the cell projection. Its subcellular location is the dendritic spine. It localises to the postsynaptic cell membrane. The protein resides in the membrane. Plays an essential role in docking and fusion steps of regulated exocytosis. At the presynaptic level, RPH3A is recruited by RAB3A to the synaptic vesicle membrane in a GTP-dependent manner where it modulates synaptic vesicle trafficking and calcium-triggered neurotransmitter release. In the post-synaptic compartment, forms a ternary complex with GRIN2A and DLG4 and regulates NMDA receptor stability. Also plays a role in the exocytosis of arginine vasopressin hormone. The sequence is that of Rabphilin-3A (Rph3a) from Rattus norvegicus (Rat).